Reading from the N-terminus, the 376-residue chain is MARVEL domain-containing protein 3 (376 aa).

Residues 1 to 95 show a composition bias toward basic and acidic residues; sequence MKNTSGHREP…EKSRQSRARP (95 aa). Residues 1–134 form a disordered region; that stretch reads MKNTSGHREP…GRRGLESERA (134 aa). At 1–173 the chain is on the cytoplasmic side; that stretch reads MKNTSGHREP…HKCRYLCTGR (173 aa). The region spanning 168–361 is the MARVEL domain; sequence YLCTGRACWQ…GAVLAFRGYR (194 aa). Residues 174-194 traverse the membrane as a helical segment; it reads ACWQMLKALLNLLILACSSVS. Over 195 to 247 the chain is Extracellular; that stretch reads YNSTGGYTGITSLGGIYYYQYGGAYSGFDGADGERAQQLDVQFYQLKLPTVTA. The chain crosses the membrane as a helical span at residues 248-268; the sequence is AMAYSGALMTFSCLTLLAGAL. Over 269-275 the chain is Cytoplasmic; sequence RVPWHCP. The helical transmembrane segment at 276 to 296 threads the bilayer; that stretch reads LWLVIEGLMDALIAGAYVPGL. Over 297-335 the chain is Extracellular; that stretch reads YFFFQHLSAAYSSDVCKERETLYQSKGYSGFNCGVHGGD. A helical transmembrane segment spans residues 336-356; sequence IGAGVFAAMAIGVFAVGAVLA. Topologically, residues 357–376 are cytoplasmic; it reads FRGYRKVKKLKEKPTEMLEF.

Widely expressed with highest levels in small intestine, colon, stomach and lung. Liver expresses only isoform 2.

Its subcellular location is the membrane. The protein resides in the cell junction. The protein localises to the tight junction. Its function is as follows. As a component of tight junctions, plays a role in paracellular ion conductivity. In Mus musculus (Mouse), this protein is MARVEL domain-containing protein 3 (Marveld3).